We begin with the raw amino-acid sequence, 523 residues long: Na(+)/H(+) antiporter NhaB (523 aa).

10 consecutive transmembrane segments (helical) span residues 28–48 (FLII…WLLV), 51–71 (FIFT…GLLA), 89–109 (LSAN…IYFV), 137–157 (MAAF…VISI), 237–257 (FFIR…ATCV), 302–322 (AIIC…VGLI), 347–367 (TESL…AVII), 390–410 (LFYI…VGTV), 445–465 (VATP…LAPL), and 476–496 (MALP…MYLL).

Belongs to the NhaB Na(+)/H(+) (TC 2.A.34) antiporter family.

It localises to the cell inner membrane. It catalyses the reaction 2 Na(+)(in) + 3 H(+)(out) = 2 Na(+)(out) + 3 H(+)(in). Its function is as follows. Na(+)/H(+) antiporter that extrudes sodium in exchange for external protons. This is Na(+)/H(+) antiporter NhaB from Tolumonas auensis (strain DSM 9187 / NBRC 110442 / TA 4).